The primary structure comprises 187 residues: Adenine phosphoribosyltransferase (187 aa).

The protein belongs to the purine/pyrimidine phosphoribosyltransferase family. Homodimer.

The protein localises to the cytoplasm. The enzyme catalyses AMP + diphosphate = 5-phospho-alpha-D-ribose 1-diphosphate + adenine. The protein operates within purine metabolism; AMP biosynthesis via salvage pathway; AMP from adenine: step 1/1. Catalyzes a salvage reaction resulting in the formation of AMP, that is energically less costly than de novo synthesis. This chain is Adenine phosphoribosyltransferase, found in Paracoccus denitrificans (strain Pd 1222).